We begin with the raw amino-acid sequence, 262 residues long: Aquaporin TIP3-1 (262 aa).

Transmembrane regions (helical) follow at residues 27–47 (AAISEFIATAIFVFAAEGSVL) and 61–81 (GLVAVALAHALALAVAVAVAV). An NPA 1 motif is present at residues 89-91 (NPA). 3 helical membrane-spanning segments follow: residues 104-124 (LVRAVLYWVAQLLGAVAATLL), 148-168 (AVLLEAVMTFGLMYAYYATVI), and 175-195 (VGTIAPLAVGFLLGANVLAGG). Residues 203-205 (NPA) carry the NPA 2 motif. The chain crosses the membrane as a helical span at residues 223-243 (YWLGPFLGAGLAGLVYEYLVI).

Belongs to the MIP/aquaporin (TC 1.A.8) family. TIP (TC 1.A.8.10) subfamily.

It is found in the vacuole membrane. Aquaporins facilitate the transport of water and small neutral solutes across cell membranes. The protein is Aquaporin TIP3-1 (TIP3-1) of Zea mays (Maize).